The following is a 316-amino-acid chain: Olfactory receptor 2T11 (316 aa).

The Extracellular portion of the chain corresponds to 1-22 (MTNTSSSDFTLLGLLVNSEAAG). N3 carries N-linked (GlcNAc...) asparagine glycosylation. A helical membrane pass occupies residues 23 to 46 (IVFTVILAVFLGAVTANLVMIFLI). Residues 47 to 54 (QVDSRLHT) lie on the Cytoplasmic side of the membrane. Residues 55 to 76 (PMYFLLSQLSIMDTLFICTTVP) form a helical membrane-spanning segment. The Extracellular segment spans residues 77 to 97 (KLLADMVSKEKIISFVACGIQ). The cysteines at positions 94 and 186 are disulfide-linked. A helical membrane pass occupies residues 98-117 (IFLYLTMIGSEFFLLGLMAY). The Cytoplasmic segment spans residues 118 to 136 (DCYVAVCNPLRYPVLMNRK). A helical membrane pass occupies residues 137-155 (KCLLLAAGAWFGGSLDGFL). The Extracellular portion of the chain corresponds to 156 to 192 (LTPITMNVPYCGSRSINHFFCEIPAVLKLACADTSLY). The helical transmembrane segment at 193–216 (ETLMYICCVLMLLIPISIISTSYS) threads the bilayer. Over 217 to 233 (LILLTIHRMPSAEGRKK) the chain is Cytoplasmic. A helical membrane pass occupies residues 234–256 (AFTTCSSHLTVVSIFYGAAFYTY). Residues 257-269 (VLPQSFHTPEQDK) lie on the Extracellular side of the membrane. The helical transmembrane segment at 270–289 (VVSAFYTIVTPMLNPLIYSL) threads the bilayer. Topologically, residues 290–316 (RNKDVIGAFKKVFACCSSAQKVATSDA) are cytoplasmic.

The protein belongs to the G-protein coupled receptor 1 family.

It localises to the cell membrane. In terms of biological role, odorant receptor. This Homo sapiens (Human) protein is Olfactory receptor 2T11 (OR2T11).